The following is a 253-amino-acid chain: Probable proteasome subunit alpha type-7 (253 aa).

Phosphoserine is present on Ser-104.

The protein belongs to the peptidase T1A family. The 26S proteasome consists of a 20S proteasome core and two 19S regulatory subunits. The 20S proteasome core is composed of 28 subunits that are arranged in four stacked rings, resulting in a barrel-shaped structure. The two end rings are each formed by seven alpha subunits, and the two central rings are each formed by seven beta subunits. The catalytic chamber with the active sites is on the inside of the barrel.

It is found in the cytoplasm. The protein localises to the nucleus. Its function is as follows. The proteasome is a multicatalytic proteinase complex which is characterized by its ability to cleave peptides with Arg, Phe, Tyr, Leu, and Glu adjacent to the leaving group at neutral or slightly basic pH. The proteasome has an ATP-dependent proteolytic activity. The sequence is that of Probable proteasome subunit alpha type-7 (pre10) from Schizosaccharomyces pombe (strain 972 / ATCC 24843) (Fission yeast).